Here is a 90-residue protein sequence, read N- to C-terminus: Small ribosomal subunit protein uS15c (90 aa).

It belongs to the universal ribosomal protein uS15 family. As to quaternary structure, part of the 30S ribosomal subunit.

The protein localises to the plastid. It localises to the chloroplast. The chain is Small ribosomal subunit protein uS15c (rps15) from Drimys granadensis.